A 217-amino-acid chain; its full sequence is Zinc finger CCHC-type and RNA-binding motif-containing protein 1 (217 aa).

In terms of domain architecture, RRM spans 10-88 (STVYVSNLPF…RVIKASIAID (79 aa)). Residues 105-122 (SKCYECGESGHLSYACPK) form a CCHC-type zinc finger. The interval 120-217 (CPKNMLGERE…YFSDEEELSD (98 aa)) is disordered. Residues 145–163 (PEEEIEEVEVSEEEGEDPA) show a composition bias toward acidic residues. Residues Ser155, Ser210, and Ser216 each carry the phosphoserine modification.

As to quaternary structure, component of the U11/U12 snRNPs that are part of the U12-type spliceosome. Interacts with ZRSR1.

It is found in the nucleus. The protein localises to the nucleoplasm. In Rattus norvegicus (Rat), this protein is Zinc finger CCHC-type and RNA-binding motif-containing protein 1 (Zcrb1).